We begin with the raw amino-acid sequence, 392 residues long: Extracellular metalloproteinase 4 (392 aa).

The propeptide occupies 1-9 (VHSVVDYVS). 2 N-linked (GlcNAc...) asparagine glycosylation sites follow: Asn27 and Asn176. His193 is a binding site for Zn(2+). Glu194 is a catalytic residue. His197 contacts Zn(2+). Asn359 and Asn385 each carry an N-linked (GlcNAc...) asparagine glycan.

The protein belongs to the peptidase M36 family. Zn(2+) serves as cofactor.

The protein localises to the secreted. Functionally, secreted metalloproteinase probably acting as a virulence factor. The chain is Extracellular metalloproteinase 4 (MEP4) from Trichophyton violaceum.